Here is a 140-residue protein sequence, read N- to C-terminus: Large-conductance mechanosensitive channel (140 aa).

The next 2 membrane-spanning stretches (helical) occupy residues Val21–Ile41 and Gly82–Ile102.

It belongs to the MscL family. As to quaternary structure, homopentamer.

It is found in the cell inner membrane. Its function is as follows. Channel that opens in response to stretch forces in the membrane lipid bilayer. May participate in the regulation of osmotic pressure changes within the cell. This chain is Large-conductance mechanosensitive channel, found in Leptothrix cholodnii (strain ATCC 51168 / LMG 8142 / SP-6) (Leptothrix discophora (strain SP-6)).